A 123-amino-acid chain; its full sequence is Large ribosomal subunit protein uL14 (123 aa).

It belongs to the universal ribosomal protein uL14 family. Part of the 50S ribosomal subunit. Forms a cluster with proteins L3 and L19. In the 70S ribosome, L14 and L19 interact and together make contacts with the 16S rRNA in bridges B5 and B8.

Its function is as follows. Binds to 23S rRNA. Forms part of two intersubunit bridges in the 70S ribosome. This is Large ribosomal subunit protein uL14 from Escherichia coli O139:H28 (strain E24377A / ETEC).